A 480-amino-acid chain; its full sequence is Chromosomal replication initiator protein DnaA (480 aa).

The tract at residues methionine 1–arginine 71 is domain I, interacts with DnaA modulators. The tract at residues arginine 71–serine 142 is domain II. The segment at arginine 143–alanine 359 is domain III, AAA+ region. 4 residues coordinate ATP: glycine 187, glycine 189, lysine 190, and threonine 191. Positions arginine 360–glycine 480 are domain IV, binds dsDNA.

Belongs to the DnaA family. Oligomerizes as a right-handed, spiral filament on DNA at oriC.

The protein localises to the cytoplasm. In terms of biological role, plays an essential role in the initiation and regulation of chromosomal replication. ATP-DnaA binds to the origin of replication (oriC) to initiate formation of the DNA replication initiation complex once per cell cycle. Binds the DnaA box (a 9 base pair repeat at the origin) and separates the double-stranded (ds)DNA. Forms a right-handed helical filament on oriC DNA; dsDNA binds to the exterior of the filament while single-stranded (ss)DNA is stabiized in the filament's interior. The ATP-DnaA-oriC complex binds and stabilizes one strand of the AT-rich DNA unwinding element (DUE), permitting loading of DNA polymerase. After initiation quickly degrades to an ADP-DnaA complex that is not apt for DNA replication. Binds acidic phospholipids. In Bordetella bronchiseptica (strain ATCC BAA-588 / NCTC 13252 / RB50) (Alcaligenes bronchisepticus), this protein is Chromosomal replication initiator protein DnaA.